Consider the following 115-residue polypeptide: MADTLLKCTTRHVRLFTAALQEEDLVPSDDQLTLDLDPDNEFLWDAASLAKVQGRFKELVDAAAGGELSDYTLRRIGTDLEGFIRQLLQAGELSYNPDGRVQNFSMGLPRTPELL.

It belongs to the complex I NdhM subunit family. As to quaternary structure, NDH-1 can be composed of about 15 different subunits; different subcomplexes with different compositions have been identified which probably have different functions.

It is found in the cellular thylakoid membrane. The catalysed reaction is a plastoquinone + NADH + (n+1) H(+)(in) = a plastoquinol + NAD(+) + n H(+)(out). The enzyme catalyses a plastoquinone + NADPH + (n+1) H(+)(in) = a plastoquinol + NADP(+) + n H(+)(out). Functionally, NDH-1 shuttles electrons from an unknown electron donor, via FMN and iron-sulfur (Fe-S) centers, to quinones in the respiratory and/or the photosynthetic chain. The immediate electron acceptor for the enzyme in this species is believed to be plastoquinone. Couples the redox reaction to proton translocation, and thus conserves the redox energy in a proton gradient. Cyanobacterial NDH-1 also plays a role in inorganic carbon-concentration. This chain is NAD(P)H-quinone oxidoreductase subunit M, found in Synechococcus sp. (strain CC9605).